The chain runs to 349 residues: Transcription repressor OFP5 (349 aa).

3 disordered regions span residues methionine 1–arginine 20, lysine 29–asparagine 94, and lysine 143–arginine 183. The segment covering valine 10–arginine 20 has biased composition (low complexity). A compositionally biased stretch (basic and acidic residues) spans lysine 37–alanine 48. Positions serine 49–threonine 62 are enriched in polar residues. Basic and acidic residues-rich tracts occupy residues arginine 63–asparagine 94 and lysine 143–valine 167. Residues valine 286–aspartate 345 enclose the OVATE domain.

Interacts with BLH1, BLH2, BLH3, BLH4, BLH6 and BLH10. Expressed in roots, rosette and cauline leaves, and flower buds.

It localises to the nucleus. Transcriptional repressor that regulates multiple aspects of plant growth and development through the regulation of BEL1-LIKE (BLH) and KNOX TALE (KNAT) homeodomain transcription factors. Required for embryo development. The sequence is that of Transcription repressor OFP5 (OFP5) from Arabidopsis thaliana (Mouse-ear cress).